A 286-amino-acid polypeptide reads, in one-letter code: Formamidopyrimidine-DNA glycosylase (286 aa).

Proline 2 serves as the catalytic Schiff-base intermediate with DNA. Catalysis depends on glutamate 3, which acts as the Proton donor. The active-site Proton donor; for beta-elimination activity is the lysine 61. Residues histidine 103, arginine 122, and arginine 164 each contribute to the DNA site. The segment at 250–284 (NAYGQTGEPCGRCGTQIVRENFMNRGSHYCPNCQK) adopts an FPG-type zinc-finger fold. Arginine 274 functions as the Proton donor; for delta-elimination activity in the catalytic mechanism.

The protein belongs to the FPG family. Monomer. The cofactor is Zn(2+).

It catalyses the reaction Hydrolysis of DNA containing ring-opened 7-methylguanine residues, releasing 2,6-diamino-4-hydroxy-5-(N-methyl)formamidopyrimidine.. The catalysed reaction is 2'-deoxyribonucleotide-(2'-deoxyribose 5'-phosphate)-2'-deoxyribonucleotide-DNA = a 3'-end 2'-deoxyribonucleotide-(2,3-dehydro-2,3-deoxyribose 5'-phosphate)-DNA + a 5'-end 5'-phospho-2'-deoxyribonucleoside-DNA + H(+). In terms of biological role, involved in base excision repair of DNA damaged by oxidation or by mutagenic agents. Acts as a DNA glycosylase that recognizes and removes damaged bases. Has a preference for oxidized purines, such as 7,8-dihydro-8-oxoguanine (8-oxoG). Has AP (apurinic/apyrimidinic) lyase activity and introduces nicks in the DNA strand. Cleaves the DNA backbone by beta-delta elimination to generate a single-strand break at the site of the removed base with both 3'- and 5'-phosphates. This chain is Formamidopyrimidine-DNA glycosylase, found in Corynebacterium glutamicum (strain R).